The chain runs to 192 residues: Putative acetyltransferase YjbC (192 aa).

Residues 1–139 (MNWYEKLSEY…MEILYWSPKT (139 aa)) enclose the N-acetyltransferase domain.

The protein localises to the cytoplasm. This chain is Putative acetyltransferase YjbC (yjbC), found in Bacillus subtilis (strain 168).